The sequence spans 451 residues: Phosphoglucosamine mutase (451 aa).

Serine 101 serves as the catalytic Phosphoserine intermediate. Residues serine 101, aspartate 240, aspartate 242, and aspartate 244 each contribute to the Mg(2+) site. Serine 101 is subject to Phosphoserine.

It belongs to the phosphohexose mutase family. Requires Mg(2+) as cofactor. Activated by phosphorylation.

The enzyme catalyses alpha-D-glucosamine 1-phosphate = D-glucosamine 6-phosphate. Its function is as follows. Catalyzes the conversion of glucosamine-6-phosphate to glucosamine-1-phosphate. This chain is Phosphoglucosamine mutase, found in Thioalkalivibrio sulfidiphilus (strain HL-EbGR7).